Consider the following 198-residue polypeptide: Pyridoxine/pyridoxamine 5'-phosphate oxidase (198 aa).

FMN-binding positions include 47-52 (RMVLVK), 62-63 (FT), R68, K69, and Q91. K52 contacts substrate. Substrate is bound by residues Y109, R113, and S117. FMN is bound by residues 126–127 (QS) and W171. 177–179 (RLH) serves as a coordination point for substrate. R181 is a binding site for FMN.

The protein belongs to the pyridoxamine 5'-phosphate oxidase family. As to quaternary structure, homodimer. It depends on FMN as a cofactor.

It catalyses the reaction pyridoxamine 5'-phosphate + O2 + H2O = pyridoxal 5'-phosphate + H2O2 + NH4(+). It carries out the reaction pyridoxine 5'-phosphate + O2 = pyridoxal 5'-phosphate + H2O2. It functions in the pathway cofactor metabolism; pyridoxal 5'-phosphate salvage; pyridoxal 5'-phosphate from pyridoxamine 5'-phosphate: step 1/1. Its pathway is cofactor metabolism; pyridoxal 5'-phosphate salvage; pyridoxal 5'-phosphate from pyridoxine 5'-phosphate: step 1/1. In terms of biological role, catalyzes the oxidation of either pyridoxine 5'-phosphate (PNP) or pyridoxamine 5'-phosphate (PMP) into pyridoxal 5'-phosphate (PLP). In Anaeromyxobacter dehalogenans (strain 2CP-C), this protein is Pyridoxine/pyridoxamine 5'-phosphate oxidase.